The sequence spans 291 residues: 4-diphosphocytidyl-2-C-methyl-D-erythritol kinase (291 aa).

Lysine 8 is an active-site residue. 89–99 serves as a coordination point for ATP; sequence PIGSGIGGGSS. Residue aspartate 131 is part of the active site.

This sequence belongs to the GHMP kinase family. IspE subfamily.

The enzyme catalyses 4-CDP-2-C-methyl-D-erythritol + ATP = 4-CDP-2-C-methyl-D-erythritol 2-phosphate + ADP + H(+). It participates in isoprenoid biosynthesis; isopentenyl diphosphate biosynthesis via DXP pathway; isopentenyl diphosphate from 1-deoxy-D-xylulose 5-phosphate: step 3/6. Functionally, catalyzes the phosphorylation of the position 2 hydroxy group of 4-diphosphocytidyl-2C-methyl-D-erythritol. The protein is 4-diphosphocytidyl-2-C-methyl-D-erythritol kinase of Chlamydia abortus (strain DSM 27085 / S26/3) (Chlamydophila abortus).